The primary structure comprises 205 residues: Ribosomal RNA large subunit methyltransferase E (205 aa).

S-adenosyl-L-methionine-binding residues include Gly60, Trp62, Asp80, Asp96, and Asp121. Residue Lys161 is the Proton acceptor of the active site.

This sequence belongs to the class I-like SAM-binding methyltransferase superfamily. RNA methyltransferase RlmE family.

It is found in the cytoplasm. The catalysed reaction is uridine(2552) in 23S rRNA + S-adenosyl-L-methionine = 2'-O-methyluridine(2552) in 23S rRNA + S-adenosyl-L-homocysteine + H(+). In terms of biological role, specifically methylates the uridine in position 2552 of 23S rRNA at the 2'-O position of the ribose in the fully assembled 50S ribosomal subunit. The sequence is that of Ribosomal RNA large subunit methyltransferase E from Dechloromonas aromatica (strain RCB).